The sequence spans 315 residues: tRNA dimethylallyltransferase (315 aa).

ATP is bound at residue 10–17 (GPTGVGKT). 12 to 17 (TGVGKT) contacts substrate. An interaction with substrate tRNA region spans residues 35-38 (DSMQ).

This sequence belongs to the IPP transferase family. In terms of assembly, monomer. Requires Mg(2+) as cofactor.

It carries out the reaction adenosine(37) in tRNA + dimethylallyl diphosphate = N(6)-dimethylallyladenosine(37) in tRNA + diphosphate. In terms of biological role, catalyzes the transfer of a dimethylallyl group onto the adenine at position 37 in tRNAs that read codons beginning with uridine, leading to the formation of N6-(dimethylallyl)adenosine (i(6)A). The polypeptide is tRNA dimethylallyltransferase (Thermodesulfovibrio yellowstonii (strain ATCC 51303 / DSM 11347 / YP87)).